Reading from the N-terminus, the 497-residue chain is Solute carrier family 2, facilitated glucose transporter member 6 (497 aa).

Topologically, residues 1–36 (MQEPLLRTEGLDYDTFPEVPATPGERERAGALKNRR) are cytoplasmic. The Dileucine internalization motif signature appears at 5–6 (LL). Residues 37–57 (VFLATFAAVLGNFSFGYALVY) traverse the membrane as a helical segment. Residues 58 to 80 (TSPVIPELKLSSDPALHLDKIQA) are Extracellular-facing. Residues 81–101 (SWFGSVFTLGAAAGGLSAMLL) form a helical membrane-spanning segment. Topologically, residues 102–115 (NDLLGRKLSIMFSA) are cytoplasmic. The chain crosses the membrane as a helical span at residues 116-136 (VPSAIGYAIMAGARGLWMLLL). The Extracellular segment spans residues 137–138 (GR). A helical membrane pass occupies residues 139 to 159 (MLTGFAGGLTAACIPVYVSEI). Topologically, residues 160–171 (APPDVRGALGAT) are cytoplasmic. A helical membrane pass occupies residues 172 to 192 (PQLMAVFGSLSLYALGLLLPW). Gln173 serves as a coordination point for a D-hexose. A topological domain (extracellular) is located at residue Arg193. Residues 194 to 214 (WLAVAGEGPVLIMILLLSFMP) form a helical membrane-spanning segment. At 215 to 273 (NSPRFLLSKSRDEEALQALTWLRADSEVHWEFEQIQDNVRRQSSRVSWAEAREPRVYRP) the chain is on the cytoplasmic side. A helical transmembrane segment spans residues 274–294 (VLIAVLMRFLQQLTGITPILV). 284 to 285 (QQ) contacts a D-hexose. Over 295–312 (YLQTIFDNTSVVLPSQQD) the chain is Extracellular. Residue Asn302 is glycosylated (N-linked (GlcNAc...) asparagine). The chain crosses the membrane as a helical span at residues 313–333 (AAIVGAVRLLSVLIAAVTMDL). The Cytoplasmic segment spans residues 334–337 (AGRK). A helical membrane pass occupies residues 338-358 (VLLYVSASVMFAANLTLGLYV). Over 359–385 (QFVPRPLTPNSTVEIVTLGDTAFNYLT) the chain is Extracellular. N-linked (GlcNAc...) asparagine glycosylation occurs at Asn368. Residues 386-406 (LIPLLATMLFIMGYAMGWGPI) traverse the membrane as a helical segment. The Cytoplasmic portion of the chain corresponds to 407-425 (TWLLMSEVLPLRARGVASG). Residue Trp408 participates in a D-hexose binding. A helical transmembrane segment spans residues 426–446 (LCVLVSWLTAFVLTNYFLLAV). Asn447 is a topological domain (extracellular). The chain crosses the membrane as a helical span at residues 448 to 468 (AFGLQVPFFFFSAICLLSLLF). Topologically, residues 469-497 (TGCCVPETRGRSLEQIEAFFHTRRMSFRP) are cytoplasmic.

This sequence belongs to the major facilitator superfamily. Sugar transporter (TC 2.A.1.1) family. As to expression, mainly expressed in brain and spleen. Also expressed in lung, heart, muscle, liver, kidney, fat, whole blood, testes, ovaries and uterus.

It localises to the lysosome membrane. Its function is as follows. Probable sugar transporter that acts as a regulator of glycolysis in macrophages. Does not transport glucose. This chain is Solute carrier family 2, facilitated glucose transporter member 6, found in Mus musculus (Mouse).